We begin with the raw amino-acid sequence, 360 residues long: Photosystem II protein D1 (360 aa).

3 helical membrane passes run Tyr30–Ile47, His119–Leu134, and Trp143–Ala157. His119 is a chlorophyll a binding site. Trp127 serves as a coordination point for pheophytin a. Residues Asp171 and Glu190 each coordinate [CaMn4O5] cluster. The chain crosses the membrane as a helical span at residues Phe198 to Leu219. Chlorophyll a is bound at residue His199. A quinone is bound by residues His216 and Ser265–Phe266. Residue His216 participates in Fe cation binding. Position 273 (His273) interacts with Fe cation. A helical transmembrane segment spans residues Phe275–Met289. Positions 333, 334, 343, and 345 each coordinate [CaMn4O5] cluster. Residues Ala346 to Gly360 constitute a propeptide that is removed on maturation.

It belongs to the reaction center PufL/M/PsbA/D family. As to quaternary structure, PSII is composed of 1 copy each of membrane proteins PsbA, PsbB, PsbC, PsbD, PsbE, PsbF, PsbH, PsbI, PsbJ, PsbK, PsbL, PsbM, PsbT, PsbX, PsbY, Psb30/Ycf12, peripheral proteins PsbO, CyanoQ (PsbQ), PsbU, PsbV and a large number of cofactors. It forms dimeric complexes. It depends on The D1/D2 heterodimer binds P680, chlorophylls that are the primary electron donor of PSII, and subsequent electron acceptors. It shares a non-heme iron and each subunit binds pheophytin, quinone, additional chlorophylls, carotenoids and lipids. D1 provides most of the ligands for the Mn4-Ca-O5 cluster of the oxygen-evolving complex (OEC). There is also a Cl(-1) ion associated with D1 and D2, which is required for oxygen evolution. The PSII complex binds additional chlorophylls, carotenoids and specific lipids. as a cofactor. Tyr-162 forms a radical intermediate that is referred to as redox-active TyrZ, YZ or Y-Z. Post-translationally, C-terminally processed by CtpA; processing is essential to allow assembly of the oxygen-evolving complex and thus photosynthetic growth.

The protein localises to the cellular thylakoid membrane. The enzyme catalyses 2 a plastoquinone + 4 hnu + 2 H2O = 2 a plastoquinol + O2. Its function is as follows. Photosystem II (PSII) is a light-driven water:plastoquinone oxidoreductase that uses light energy to abstract electrons from H(2)O, generating O(2) and a proton gradient subsequently used for ATP formation. It consists of a core antenna complex that captures photons, and an electron transfer chain that converts photonic excitation into a charge separation. The D1/D2 (PsbA/PsbD) reaction center heterodimer binds P680, the primary electron donor of PSII as well as several subsequent electron acceptors. The chain is Photosystem II protein D1 from Prochlorococcus marinus (strain SARG / CCMP1375 / SS120).